A 292-amino-acid polypeptide reads, in one-letter code: Cytidine deaminase (292 aa).

2 consecutive CMP/dCMP-type deaminase domains span residues 47 to 167 (TTLK…FGPK) and 186 to 292 (DHQD…YYSL). 88-90 (NQE) serves as a coordination point for substrate. Position 101 (His101) interacts with Zn(2+). Glu103 acts as the Proton donor in catalysis. Positions 128 and 131 each coordinate Zn(2+).

This sequence belongs to the cytidine and deoxycytidylate deaminase family. In terms of assembly, homodimer. Requires Zn(2+) as cofactor.

The enzyme catalyses cytidine + H2O + H(+) = uridine + NH4(+). It catalyses the reaction 2'-deoxycytidine + H2O + H(+) = 2'-deoxyuridine + NH4(+). Functionally, this enzyme scavenges exogenous and endogenous cytidine and 2'-deoxycytidine for UMP synthesis. This Haemophilus influenzae (strain ATCC 51907 / DSM 11121 / KW20 / Rd) protein is Cytidine deaminase.